Consider the following 528-residue polypeptide: Dihydromonacolin L monooxygenase LovA (528 aa).

At 1 to 23 the chain is on the cytoplasmic side; that stretch reads MTVDALTQPHHLLSLAWNDTQQH. The chain crosses the membrane as a helical; Signal-anchor for type II membrane protein span at residues 24-44; sequence GSWFAPLVTTSAGLLCLLLYL. At 45–528 the chain is on the lumenal side; the sequence is CSSGRRSELP…DEDIRLPGSL (484 aa). The N-linked (GlcNAc...) asparagine glycan is linked to asparagine 399. Cysteine 465 serves as a coordination point for heme.

The protein belongs to the cytochrome P450 family. Requires heme as cofactor.

The protein localises to the membrane. It is found in the endoplasmic reticulum membrane. It carries out the reaction dihydromonacolin L carboxylate + reduced [NADPH--hemoprotein reductase] + O2 = monacolin L carboxylate + oxidized [NADPH--hemoprotein reductase] + 2 H2O + H(+). The catalysed reaction is monacolin L carboxylate + reduced [NADPH--hemoprotein reductase] + O2 = monacolin J carboxylate + oxidized [NADPH--hemoprotein reductase] + H2O + H(+). The protein operates within polyketide biosynthesis; lovastatin biosynthesis. In terms of biological role, dihydromonacolin L monooxygenase; part of the gene cluster that mediates the biosynthesis of lovastatin (also known as mevinolin, mevacor or monacolin K), a hypolipidemic inhibitor of (3S)-hydroxymethylglutaryl-coenzyme A (HMG-CoA) reductase (HMGR). The first step in the biosynthesis of lovastatin is the production of dihydromonacolin L acid by the lovastatin nonaketide synthase lovB and the trans-acting enoyl reductase lovC via condensation of one acetyl-CoA unit and 8 malonyl-CoA units. Dihydromonacolin L acid is released from lovB by the thioesterase lovG. Next, dihydromonacolin L acid is oxidized by the dihydromonacolin L monooxygenase lovA twice to form monacolin J acid. The 2-methylbutyrate moiety of lovastatin is synthesized by the lovastatin diketide synthase lovF via condensation of one acetyl-CoA unit and one malonyl-CoA unit. Finally, the covalent attachment of this moiety to monacolin J acid is catalyzed by the transesterase lovD to yield lovastatin. LovD has broad substrate specificity and can also convert monacolin J to simvastatin using alpha-dimethylbutanoyl-S-methyl-3-mercaptopropionate (DMB-S-MMP) as the thioester acyl donor, and can also catalyze the reverse reaction and function as hydrolase in vitro. LovD has much higher activity with LovF-bound 2-methylbutanoate than with free diketide substrates. This is Dihydromonacolin L monooxygenase LovA from Aspergillus terreus (strain NIH 2624 / FGSC A1156).